We begin with the raw amino-acid sequence, 696 residues long: Polyribonucleotide nucleotidyltransferase (696 aa).

The Mg(2+) site is built by Asp-483 and Asp-489. In terms of domain architecture, KH spans 550-609; sequence PRITTIYVKTDKIRDVIGSGGKNIRGITEATGVTIDIDDTGKINIASTDKAACDLAIKMI. The S1 motif domain maps to 619–687; that stretch reads GKLYMGLVKK…KQGKIKLSRK (69 aa).

It belongs to the polyribonucleotide nucleotidyltransferase family. The cofactor is Mg(2+).

The protein resides in the cytoplasm. The enzyme catalyses RNA(n+1) + phosphate = RNA(n) + a ribonucleoside 5'-diphosphate. Involved in mRNA degradation. Catalyzes the phosphorolysis of single-stranded polyribonucleotides processively in the 3'- to 5'-direction. The protein is Polyribonucleotide nucleotidyltransferase of Geotalea uraniireducens (strain Rf4) (Geobacter uraniireducens).